The following is a 260-amino-acid chain: Putative [LysW]-aminoadipate/[LysW]-glutamate kinase (260 aa).

Substrate contacts are provided by residues 35–36, Arg-62, and Asn-162; that span reads GG.

Belongs to the acetylglutamate kinase family. LysZ subfamily.

The protein resides in the cytoplasm. The catalysed reaction is [amino-group carrier protein]-C-terminal-N-(1,4-dicarboxybutan-1-yl)-L-glutamine + ATP = [amino-group carrier protein]-C-terminal-N-(1-carboxy-5-phosphooxy-5-oxopentan-1-yl)-L-glutamine + ADP. It catalyses the reaction [amino-group carrier protein]-C-terminal-gamma-(L-glutamyl)-L-glutamate + ATP = [amino-group carrier protein]-C-terminal-gamma-(5-phospho-L-glutamyl)-L-glutamate + ADP. Its pathway is amino-acid biosynthesis; L-lysine biosynthesis via AAA pathway; L-lysine from L-alpha-aminoadipate (Thermus route): step 2/5. It participates in amino-acid biosynthesis; L-arginine biosynthesis. Its function is as follows. Involved in both the arginine and lysine biosynthetic pathways. Phosphorylates the LysW-bound precursors glutamate (for arginine biosynthesis), respectively alpha-aminoadipate (for lysine biosynthesis). The chain is Putative [LysW]-aminoadipate/[LysW]-glutamate kinase from Pyrobaculum neutrophilum (strain DSM 2338 / JCM 9278 / NBRC 100436 / V24Sta) (Thermoproteus neutrophilus).